The sequence spans 244 residues: Orotidine 5'-phosphate decarboxylase (244 aa).

Substrate-binding positions include D12, K34, 61 to 70 (DLKLFDIPNT), T125, R187, Q196, G216, and R217. The active-site Proton donor is K63.

Belongs to the OMP decarboxylase family. Type 1 subfamily. As to quaternary structure, homodimer.

The enzyme catalyses orotidine 5'-phosphate + H(+) = UMP + CO2. The protein operates within pyrimidine metabolism; UMP biosynthesis via de novo pathway; UMP from orotate: step 2/2. Its function is as follows. Catalyzes the decarboxylation of orotidine 5'-monophosphate (OMP) to uridine 5'-monophosphate (UMP). This Dictyoglomus turgidum (strain DSM 6724 / Z-1310) protein is Orotidine 5'-phosphate decarboxylase.